Reading from the N-terminus, the 137-residue chain is Small ribosomal subunit protein uS12 (137 aa).

Positions 1–20 (MPTTNQLVNRGRTSKVQKQN) are disordered. Aspartate 102 is modified (3-methylthioaspartic acid).

It belongs to the universal ribosomal protein uS12 family. In terms of assembly, part of the 30S ribosomal subunit. Contacts proteins S8 and S17. May interact with IF1 in the 30S initiation complex.

Functionally, with S4 and S5 plays an important role in translational accuracy. In terms of biological role, interacts with and stabilizes bases of the 16S rRNA that are involved in tRNA selection in the A site and with the mRNA backbone. Located at the interface of the 30S and 50S subunits, it traverses the body of the 30S subunit contacting proteins on the other side and probably holding the rRNA structure together. The combined cluster of proteins S8, S12 and S17 appears to hold together the shoulder and platform of the 30S subunit. The protein is Small ribosomal subunit protein uS12 of Mycoplasmopsis synoviae (strain 53) (Mycoplasma synoviae).